Consider the following 186-residue polypeptide: NADH-quinone oxidoreductase subunit B (186 aa).

Positions 44, 45, 110, and 139 each coordinate [4Fe-4S] cluster.

The protein belongs to the complex I 20 kDa subunit family. NDH-1 is composed of 14 different subunits. Subunits NuoB, C, D, E, F, and G constitute the peripheral sector of the complex. The cofactor is [4Fe-4S] cluster.

The protein localises to the cell inner membrane. It carries out the reaction a quinone + NADH + 5 H(+)(in) = a quinol + NAD(+) + 4 H(+)(out). Its function is as follows. NDH-1 shuttles electrons from NADH, via FMN and iron-sulfur (Fe-S) centers, to quinones in the respiratory chain. The immediate electron acceptor for the enzyme in this species is believed to be ubiquinone. Couples the redox reaction to proton translocation (for every two electrons transferred, four hydrogen ions are translocated across the cytoplasmic membrane), and thus conserves the redox energy in a proton gradient. This is NADH-quinone oxidoreductase subunit B from Leptospira biflexa serovar Patoc (strain Patoc 1 / Ames).